A 1146-amino-acid polypeptide reads, in one-letter code: Probable phospholipid-transporting ATPase IIB (1146 aa).

At 1-143 (MADQIPLYPV…IKNQKYNVFT (143 aa)) the chain is on the cytoplasmic side. A helical transmembrane segment spans residues 144–164 (FIPGVLYEQFKFFLNLYFLVV). The Extracellular segment spans residues 165–172 (SCSQFVPA). Residues 173 to 193 (LKIGYLYTYWAPLGFVLAVTI) form a helical membrane-spanning segment. At 194 to 381 (AREAIDEFRR…LDLELNQLTK (188 aa)) the chain is on the cytoplasmic side. A helical membrane pass occupies residues 382–402 (ALFLALVVLSVVMVTLQGFAG). At 403-407 (PWYRN) the chain is on the extracellular side. Residues 408–427 (LFRFLLLFSYIIPISLRVNL) form a helical membrane-spanning segment. At 428–938 (DMGKAAYGWM…ALGQFVMHRG (511 aa)) the chain is on the cytoplasmic side. The 4-aspartylphosphate intermediate role is filled by D467. Residues D467, K468, and T469 each coordinate ATP. Position 467 (D467) interacts with Mg(2+). Residue T469 participates in Mg(2+) binding. Over residues 508-519 (VHSQPSGHNPSS) the composition is skewed to polar residues. The disordered stretch occupies residues 508-535 (VHSQPSGHNPSSAPLRRSQSSTPKVKKS). Residues E590, F632, K637, K656, R685, T686, T765, G766, D767, R847, and K853 each contribute to the ATP site. D873 contacts Mg(2+). ATP contacts are provided by N876 and D877. Mg(2+) is bound at residue D877. Residues 939-959 (LIISTMQAVFSSVFYFASVPL) traverse the membrane as a helical segment. The Extracellular segment spans residues 960-961 (YQ). A helical transmembrane segment spans residues 962-982 (GFLMVGYATIYTMFPVFSLVL). Over 983–1011 (DQDVKPEMAILYPELYKDLTKGRSLSFKT) the chain is Cytoplasmic. The chain crosses the membrane as a helical span at residues 1012 to 1032 (FLIWVLISIYQGGILMYGALL). At 1033-1040 (LFEDEFVH) the chain is on the extracellular side. Residues 1041–1061 (VVAISFTALILTELLMVALTI) traverse the membrane as a helical segment. Residues 1062–1065 (RTWH) lie on the Cytoplasmic side of the membrane. Residues 1066-1086 (WLMVVAEFLSLGCYVASLAFL) form a helical membrane-spanning segment. The Extracellular portion of the chain corresponds to 1087–1105 (NEYFGIGRVSFGAFLDVAF). Residues 1106 to 1128 (ITTVTFLWKVSAITVVSCLPLYV) traverse the membrane as a helical segment. The Cytoplasmic segment spans residues 1129-1146 (LKYLKRKLSPPSYSKLSS).

The protein belongs to the cation transport ATPase (P-type) (TC 3.A.3) family. Type IV subfamily. Requires Mg(2+) as cofactor. As to expression, found in most tissues except spleen and muscle. Most abundant in testis. Also detected in fetal tissues.

It is found in the golgi apparatus. The protein localises to the trans-Golgi network membrane. It catalyses the reaction ATP + H2O + phospholipidSide 1 = ADP + phosphate + phospholipidSide 2.. The protein is Probable phospholipid-transporting ATPase IIB (Atp9b) of Mus musculus (Mouse).